Consider the following 276-residue polypeptide: Large ribosomal subunit protein uL2 (276 aa).

Disordered regions lie at residues 1–20 (MGIK…TTND) and 219–276 (TVRG…RRKK). Residues 7–20 (NPTTNGRRNMTTND) show a composition bias toward polar residues.

Belongs to the universal ribosomal protein uL2 family. In terms of assembly, part of the 50S ribosomal subunit. Forms a bridge to the 30S subunit in the 70S ribosome.

In terms of biological role, one of the primary rRNA binding proteins. Required for association of the 30S and 50S subunits to form the 70S ribosome, for tRNA binding and peptide bond formation. It has been suggested to have peptidyltransferase activity; this is somewhat controversial. Makes several contacts with the 16S rRNA in the 70S ribosome. The protein is Large ribosomal subunit protein uL2 of Bacillus mycoides (strain KBAB4) (Bacillus weihenstephanensis).